A 212-amino-acid polypeptide reads, in one-letter code: Large ribosomal subunit protein uL3 (212 aa).

Residues 127–161 are disordered; that stretch reads NFKRGPMAHGSKNHRLPGSTGAGTTPGRVFPGKRM.

This sequence belongs to the universal ribosomal protein uL3 family. As to quaternary structure, part of the 50S ribosomal subunit. Forms a cluster with proteins L14 and L19.

One of the primary rRNA binding proteins, it binds directly near the 3'-end of the 23S rRNA, where it nucleates assembly of the 50S subunit. The chain is Large ribosomal subunit protein uL3 from Thermosynechococcus vestitus (strain NIES-2133 / IAM M-273 / BP-1).